Reading from the N-terminus, the 348-residue chain is Uroporphyrinogen decarboxylase (348 aa).

Residues 24-28, Asp-73, Tyr-150, Ser-205, and His-324 contribute to the substrate site; that span reads RQAGR.

This sequence belongs to the uroporphyrinogen decarboxylase family. As to quaternary structure, homodimer.

The protein resides in the cytoplasm. The catalysed reaction is uroporphyrinogen III + 4 H(+) = coproporphyrinogen III + 4 CO2. It participates in porphyrin-containing compound metabolism; protoporphyrin-IX biosynthesis; coproporphyrinogen-III from 5-aminolevulinate: step 4/4. Functionally, catalyzes the decarboxylation of four acetate groups of uroporphyrinogen-III to yield coproporphyrinogen-III. In Roseiflexus sp. (strain RS-1), this protein is Uroporphyrinogen decarboxylase.